Consider the following 177-residue polypeptide: MQDQAIVAILDGIRWLQEPPVWPDDATRSWLTERGSMTQRLEKHCGKIRVRRYREGFVTACIEAWEAALLPDCGRFWLREVVLYGHDRPWLTARTLVPAAAEAGPAQQVLSLGDVPLGQWLFRHRPPARDVIQFGRVGTLWARRARLRLTEGQPLLLTEAFLPDCPLYISGGDAPQQ.

Residues M37, R79, L117, and E159 each contribute to the substrate site.

It belongs to the UbiC family. As to quaternary structure, monomer.

The protein resides in the cytoplasm. It catalyses the reaction chorismate = 4-hydroxybenzoate + pyruvate. It functions in the pathway cofactor biosynthesis; ubiquinone biosynthesis. Its function is as follows. Removes the pyruvyl group from chorismate, with concomitant aromatization of the ring, to provide 4-hydroxybenzoate (4HB) for the ubiquinone pathway. The polypeptide is Chorismate pyruvate-lyase (Sodalis glossinidius (strain morsitans)).